A 138-amino-acid polypeptide reads, in one-letter code: Proofreading thioesterase EntH (138 aa).

Glu-64 (nucleophile or proton acceptor) is an active-site residue.

This sequence belongs to the thioesterase PaaI family. In terms of assembly, homotetramer. Dimer of dimers. Interacts specifically with the aryl carrier protein (ArCP) domain of EntB.

It is found in the cytoplasm. Its pathway is siderophore biosynthesis; enterobactin biosynthesis. Required for optimal enterobactin synthesis. Acts as a proofreading enzyme that prevents EntB misacylation by hydrolyzing the thioester bound existing between EntB and wrongly charged molecules. The chain is Proofreading thioesterase EntH from Salmonella arizonae (strain ATCC BAA-731 / CDC346-86 / RSK2980).